The chain runs to 483 residues: Aspartyl/glutamyl-tRNA(Asn/Gln) amidotransferase subunit B (483 aa).

The protein belongs to the GatB/GatE family. GatB subfamily. Heterotrimer of A, B and C subunits.

The enzyme catalyses L-glutamyl-tRNA(Gln) + L-glutamine + ATP + H2O = L-glutaminyl-tRNA(Gln) + L-glutamate + ADP + phosphate + H(+). It carries out the reaction L-aspartyl-tRNA(Asn) + L-glutamine + ATP + H2O = L-asparaginyl-tRNA(Asn) + L-glutamate + ADP + phosphate + 2 H(+). Functionally, allows the formation of correctly charged Asn-tRNA(Asn) or Gln-tRNA(Gln) through the transamidation of misacylated Asp-tRNA(Asn) or Glu-tRNA(Gln) in organisms which lack either or both of asparaginyl-tRNA or glutaminyl-tRNA synthetases. The reaction takes place in the presence of glutamine and ATP through an activated phospho-Asp-tRNA(Asn) or phospho-Glu-tRNA(Gln). This Rickettsia bellii (strain RML369-C) protein is Aspartyl/glutamyl-tRNA(Asn/Gln) amidotransferase subunit B.